The chain runs to 275 residues: tRNA pseudouridine synthase A (275 aa).

The Nucleophile role is filled by Asp56. A substrate-binding site is contributed by Tyr110.

This sequence belongs to the tRNA pseudouridine synthase TruA family.

The catalysed reaction is uridine(38/39/40) in tRNA = pseudouridine(38/39/40) in tRNA. Formation of pseudouridine at positions 38, 39 and 40 in the anticodon stem and loop of transfer RNAs. The protein is tRNA pseudouridine synthase A of Haloarcula marismortui (strain ATCC 43049 / DSM 3752 / JCM 8966 / VKM B-1809) (Halobacterium marismortui).